A 402-amino-acid chain; its full sequence is NADH-quinone oxidoreductase subunit D (402 aa).

It belongs to the complex I 49 kDa subunit family. As to quaternary structure, NDH-1 is composed of 14 different subunits. Subunits NuoB, C, D, E, F, and G constitute the peripheral sector of the complex.

It is found in the cell inner membrane. The catalysed reaction is a quinone + NADH + 5 H(+)(in) = a quinol + NAD(+) + 4 H(+)(out). In terms of biological role, NDH-1 shuttles electrons from NADH, via FMN and iron-sulfur (Fe-S) centers, to quinones in the respiratory chain. The immediate electron acceptor for the enzyme in this species is believed to be ubiquinone. Couples the redox reaction to proton translocation (for every two electrons transferred, four hydrogen ions are translocated across the cytoplasmic membrane), and thus conserves the redox energy in a proton gradient. This chain is NADH-quinone oxidoreductase subunit D, found in Xanthobacter autotrophicus (strain ATCC BAA-1158 / Py2).